The chain runs to 359 residues: Phospho-N-acetylmuramoyl-pentapeptide-transferase (359 aa).

Transmembrane regions (helical) follow at residues Q3–I23, V55–F75, V80–L100, T117–F137, I156–A176, L187–F207, L231–A251, I255–T275, I280–I300, and F334–L354.

This sequence belongs to the glycosyltransferase 4 family. MraY subfamily. Mg(2+) is required as a cofactor.

Its subcellular location is the cell membrane. The enzyme catalyses UDP-N-acetyl-alpha-D-muramoyl-L-alanyl-gamma-D-glutamyl-meso-2,6-diaminopimeloyl-D-alanyl-D-alanine + di-trans,octa-cis-undecaprenyl phosphate = di-trans,octa-cis-undecaprenyl diphospho-N-acetyl-alpha-D-muramoyl-L-alanyl-D-glutamyl-meso-2,6-diaminopimeloyl-D-alanyl-D-alanine + UMP. It participates in cell wall biogenesis; peptidoglycan biosynthesis. Functionally, catalyzes the initial step of the lipid cycle reactions in the biosynthesis of the cell wall peptidoglycan: transfers peptidoglycan precursor phospho-MurNAc-pentapeptide from UDP-MurNAc-pentapeptide onto the lipid carrier undecaprenyl phosphate, yielding undecaprenyl-pyrophosphoryl-MurNAc-pentapeptide, known as lipid I. The sequence is that of Phospho-N-acetylmuramoyl-pentapeptide-transferase from Mycobacterium leprae (strain TN).